The primary structure comprises 1203 residues: Cingulin (1203 aa).

The interval 7-357 (MAEPRGPVDH…VMVSSGSTKA (351 aa)) is head. The disordered stretch occupies residues 25–48 (EPVSGAEMGTLRRGGRRPAKDARA). Positions 48–62 (ASTYGVAVRVQGIAG) match the ZIM motif. Positions 54-67 (AVRVQGIAGQPFVV) are interaction with TJP1/ZO1. Residues 89–127 (GASGALSSDLELPENPYSQVKGFPAPSQSSTSDEEPGAY) are disordered. 13 positions are modified to phosphoserine: Ser-95, Ser-96, Ser-135, Ser-137, Ser-140, Ser-155, Ser-165, Ser-214, Ser-217, Ser-258, Ser-276, Ser-338, and Ser-351. The segment at 186 to 266 (DSQLGGQARG…LSPLSGFSRS (81 aa)) is disordered. Over residues 207–231 (EQRKRSKSLDSRLPRDTFEERERQS) the composition is skewed to basic and acidic residues. The segment covering 232–266 (TNHWTSSTKYDNHVGTSKQPAQSQNLSPLSGFSRS) has biased composition (polar residues). The stretch at 358–1160 (VAGQGELTRK…SLEKDSWRKA (803 aa)) forms a coiled coil. N6-acetyllysine is present on Lys-579. The residue at position 712 (Thr-712) is a Phosphothreonine. Disordered stretches follow at residues 1034–1053 (LASS…LESQ) and 1154–1181 (KDSW…EEFD). The span at 1044 to 1053 (SASLSQLESQ) shows a compositional bias: low complexity. The tail stretch occupies residues 1161-1203 (SRSAAESALKNEGLSSDEEFDSVYDPSSIASLLTESNLQTSSC). Phosphoserine is present on residues Ser-1175, Ser-1176, and Ser-1182.

Belongs to the cingulin family. As to quaternary structure, homodimer. Interacts with TJP1/ZO1. Interacts with SPEF1. In terms of tissue distribution, localized on the cytoplasmic face of tight junctions of polarized epithelia and some endothelia. Expressed in pancreas, kidney, liver and lung, but not in skeletal muscle, placenta, brain or heart.

It is found in the cell junction. The protein resides in the tight junction. Its function is as follows. Probably plays a role in the formation and regulation of the tight junction (TJ) paracellular permeability barrier. The sequence is that of Cingulin from Homo sapiens (Human).